A 128-amino-acid chain; its full sequence is Large ribosomal subunit protein uL22 (128 aa).

Positions 1–20 (MANGHRSQIKRERNAVKDTR) are disordered. Positions 9-20 (IKRERNAVKDTR) are enriched in basic and acidic residues.

Belongs to the universal ribosomal protein uL22 family. As to quaternary structure, part of the 50S ribosomal subunit.

In terms of biological role, this protein binds specifically to 23S rRNA; its binding is stimulated by other ribosomal proteins, e.g. L4, L17, and L20. It is important during the early stages of 50S assembly. It makes multiple contacts with different domains of the 23S rRNA in the assembled 50S subunit and ribosome. The globular domain of the protein is located near the polypeptide exit tunnel on the outside of the subunit, while an extended beta-hairpin is found that lines the wall of the exit tunnel in the center of the 70S ribosome. The chain is Large ribosomal subunit protein uL22 from Lachnospira eligens (strain ATCC 27750 / DSM 3376 / VPI C15-48 / C15-B4) (Eubacterium eligens).